Consider the following 181-residue polypeptide: Oligoribonuclease (181 aa).

The region spanning leucine 8–leucine 171 is the Exonuclease domain. Residue tyrosine 129 is part of the active site.

Belongs to the oligoribonuclease family.

Its subcellular location is the cytoplasm. Functionally, 3'-to-5' exoribonuclease specific for small oligoribonucleotides. This Shewanella sp. (strain ANA-3) protein is Oligoribonuclease.